The sequence spans 374 residues: Beta-lytic metalloendopeptidase (374 aa).

An N-terminal signal peptide occupies residues 1–24 (MKKISKAGLGLALVCALATIGGNA). Positions 25 to 195 (ARRATAQRRG…RQGRPGRAAV (171 aa)) are excised as a propeptide. The segment at 128–187 (PTRQGAGDAGPRQSAAGAVRAFRRQRAGGRAARRRRVPAGLRPPVQRTAPGQGGFGPLRQ) is disordered. Basic residues predominate over residues 148 to 164 (AFRRQRAGGRAARRRRV). The cysteines at positions 261 and 307 are disulfide-linked. Zn(2+) contacts are provided by His-316 and His-318. Cys-351 and Cys-364 are disulfide-bonded.

It belongs to the peptidase M23A family. Zn(2+) serves as cofactor.

It localises to the secreted. The enzyme catalyses Cleavage of N-acetylmuramoyl-|-Ala, and of the insulin B chain at 23-Gly-|-Phe-24 &gt; 18-Val-|-Cys(SO3H).. This chain is Beta-lytic metalloendopeptidase, found in Achromobacter lyticus.